The primary structure comprises 251 residues: Anamorsin homolog (251 aa).

The segment at 1–154 (MINFSNTLVI…AENPDFNKSD (154 aa)) is N-terminal SAM-like domain. Residues 155-167 (DDNNLVSSDEEIY) are linker. Positions 170, 181, 184, and 186 each coordinate [2Fe-2S] cluster. The fe-S binding site A stretch occupies residues 170–186 (CEDKKKVVNRVCDNCTC). C216, C219, C227, and C230 together coordinate [4Fe-4S] cluster. Short sequence motifs (cx2C motif) lie at residues 216-219 (CGNC) and 227-230 (CGSC). Residues 216 to 230 (CGNCYLGDAFRCGSC) form a fe-S binding site B region.

It belongs to the anamorsin family. In terms of assembly, monomer. [2Fe-2S] cluster is required as a cofactor. Requires [4Fe-4S] cluster as cofactor.

It is found in the cytoplasm. It localises to the mitochondrion intermembrane space. In terms of biological role, component of the cytosolic iron-sulfur (Fe-S) protein assembly (CIA) machinery. Required for the maturation of extramitochondrial Fe-S proteins. Part of an electron transfer chain functioning in an early step of cytosolic Fe-S biogenesis, facilitating the de novo assembly of a [4Fe-4S] cluster on the cytosolic Fe-S scaffold complex. Electrons are transferred from NADPH via a FAD- and FMN-containing diflavin oxidoreductase. Together with the diflavin oxidoreductase, also required for the assembly of the diferric tyrosyl radical cofactor of ribonucleotide reductase (RNR), probably by providing electrons for reduction during radical cofactor maturation in the catalytic small subunit. This Plasmodium yoelii yoelii protein is Anamorsin homolog.